We begin with the raw amino-acid sequence, 318 residues long: Ribosomal RNA small subunit methyltransferase H (318 aa).

Residues 37–39 (GGH), Asp-56, Tyr-83, Asp-104, and Gln-111 contribute to the S-adenosyl-L-methionine site. Residues 293-318 (EEEIAENRRAAPARLRGAQRIREDAE) are disordered.

Belongs to the methyltransferase superfamily. RsmH family.

Its subcellular location is the cytoplasm. The catalysed reaction is cytidine(1402) in 16S rRNA + S-adenosyl-L-methionine = N(4)-methylcytidine(1402) in 16S rRNA + S-adenosyl-L-homocysteine + H(+). In terms of biological role, specifically methylates the N4 position of cytidine in position 1402 (C1402) of 16S rRNA. The sequence is that of Ribosomal RNA small subunit methyltransferase H from Streptomyces avermitilis (strain ATCC 31267 / DSM 46492 / JCM 5070 / NBRC 14893 / NCIMB 12804 / NRRL 8165 / MA-4680).